We begin with the raw amino-acid sequence, 185 residues long: UPF0669 protein C6orf120 homolog (185 aa).

The signal sequence occupies residues 1–23; that stretch reads MAARWRRILIVFVAAQVLCLVNT. The N-linked (GlcNAc...) asparagine glycan is linked to asparagine 47.

Belongs to the UPF0669 family.

It is found in the secreted. The chain is UPF0669 protein C6orf120 homolog from Gallus gallus (Chicken).